Reading from the N-terminus, the 61-residue chain is MAANCDVCGKGPGFGNNISHSHRRTSRRWNPNIQRVRTVVSGTPKRVNACTSCIKAGKVSR.

This sequence belongs to the bacterial ribosomal protein bL28 family.

In Streptomyces coelicolor (strain ATCC BAA-471 / A3(2) / M145), this protein is Large ribosomal subunit protein bL28A (rpmB1).